Consider the following 250-residue polypeptide: Pyrroloquinoline-quinone synthase (250 aa).

It belongs to the PqqC family.

The enzyme catalyses 6-(2-amino-2-carboxyethyl)-7,8-dioxo-1,2,3,4,7,8-hexahydroquinoline-2,4-dicarboxylate + 3 O2 = pyrroloquinoline quinone + 2 H2O2 + 2 H2O + H(+). Its pathway is cofactor biosynthesis; pyrroloquinoline quinone biosynthesis. Its function is as follows. Ring cyclization and eight-electron oxidation of 3a-(2-amino-2-carboxyethyl)-4,5-dioxo-4,5,6,7,8,9-hexahydroquinoline-7,9-dicarboxylic-acid to PQQ. The protein is Pyrroloquinoline-quinone synthase of Ectopseudomonas mendocina (strain ymp) (Pseudomonas mendocina).